The following is a 218-amino-acid chain: Large ribosomal subunit protein uL3 (218 aa).

Belongs to the universal ribosomal protein uL3 family. Part of the 50S ribosomal subunit. Forms a cluster with proteins L14 and L19.

Functionally, one of the primary rRNA binding proteins, it binds directly near the 3'-end of the 23S rRNA, where it nucleates assembly of the 50S subunit. The polypeptide is Large ribosomal subunit protein uL3 (Corynebacterium efficiens (strain DSM 44549 / YS-314 / AJ 12310 / JCM 11189 / NBRC 100395)).